The primary structure comprises 106 residues: Thiosulfate sulfurtransferase GlpE (106 aa).

Residues 17 to 105 (EQNEARLVDI…SYRAELPVIA (89 aa)) form the Rhodanese domain. Cys-65 (cysteine persulfide intermediate) is an active-site residue.

It belongs to the GlpE family.

It is found in the cytoplasm. The enzyme catalyses thiosulfate + hydrogen cyanide = thiocyanate + sulfite + 2 H(+). The catalysed reaction is thiosulfate + [thioredoxin]-dithiol = [thioredoxin]-disulfide + hydrogen sulfide + sulfite + 2 H(+). In terms of biological role, transferase that catalyzes the transfer of sulfur from thiosulfate to thiophilic acceptors such as cyanide or dithiols. May function in a CysM-independent thiosulfate assimilation pathway by catalyzing the conversion of thiosulfate to sulfite, which can then be used for L-cysteine biosynthesis. This is Thiosulfate sulfurtransferase GlpE from Vibrio atlanticus (strain LGP32) (Vibrio splendidus (strain Mel32)).